Consider the following 530-residue polypeptide: Ubiquitin carboxyl-terminal hydrolase 17-like protein 11 (530 aa).

The region spanning 80–375 is the USP domain; that stretch reads AGLQNMGNTC…QAYVLFYIQK (296 aa). The active-site Nucleophile is the Cys89. His334 (proton acceptor) is an active-site residue. 2 stretches are compositionally biased toward basic and acidic residues: residues 382–392 and 398–413; these read SESVSRGREPR and DTDR…RDHP. Disordered stretches follow at residues 382–413 and 509–530; these read SESV…RDHP and RGRA…LVCQ. Basic residues predominate over residues 510–524; it reads GRARRSKGKNKHSKR.

It belongs to the peptidase C19 family. USP17 subfamily.

It localises to the nucleus. It is found in the endoplasmic reticulum. It catalyses the reaction Thiol-dependent hydrolysis of ester, thioester, amide, peptide and isopeptide bonds formed by the C-terminal Gly of ubiquitin (a 76-residue protein attached to proteins as an intracellular targeting signal).. Functionally, deubiquitinating enzyme that removes conjugated ubiquitin from specific proteins to regulate different cellular processes that may include cell proliferation, progression through the cell cycle, apoptosis, cell migration, and the cellular response to viral infection. The protein is Ubiquitin carboxyl-terminal hydrolase 17-like protein 11 (USP17L11) of Homo sapiens (Human).